Consider the following 267-residue polypeptide: 4-hydroxy-tetrahydrodipicolinate reductase (267 aa).

NAD(+)-binding positions include 8 to 13 (GAAGRM), Glu34, 98 to 100 (GST), and 122 to 125 (APNM). His155 acts as the Proton donor/acceptor in catalysis. Residue His156 coordinates (S)-2,3,4,5-tetrahydrodipicolinate. The Proton donor role is filled by Lys159. A (S)-2,3,4,5-tetrahydrodipicolinate-binding site is contributed by 165–166 (GT).

It belongs to the DapB family.

Its subcellular location is the cytoplasm. The enzyme catalyses (S)-2,3,4,5-tetrahydrodipicolinate + NAD(+) + H2O = (2S,4S)-4-hydroxy-2,3,4,5-tetrahydrodipicolinate + NADH + H(+). The catalysed reaction is (S)-2,3,4,5-tetrahydrodipicolinate + NADP(+) + H2O = (2S,4S)-4-hydroxy-2,3,4,5-tetrahydrodipicolinate + NADPH + H(+). Its pathway is amino-acid biosynthesis; L-lysine biosynthesis via DAP pathway; (S)-tetrahydrodipicolinate from L-aspartate: step 4/4. In terms of biological role, catalyzes the conversion of 4-hydroxy-tetrahydrodipicolinate (HTPA) to tetrahydrodipicolinate. This is 4-hydroxy-tetrahydrodipicolinate reductase from Syntrophotalea carbinolica (strain DSM 2380 / NBRC 103641 / GraBd1) (Pelobacter carbinolicus).